A 307-amino-acid chain; its full sequence is Mitochondrial 2-oxodicarboxylate carrier 2 (307 aa).

The next 6 helical transmembrane spans lie at 10 to 30 (LPFIYQFISGAVAGISELTVM), 76 to 95 (SRLYRGISSPMLMEAPKRAT), 122 to 142 (IAAGASAGMTEAAVIVPFELI), 171 to 191 (GLYKGIESTMWRNALWNGGYF), 215 to 235 (LIAGAIGGTVGTMLNTPFDVV), and 280 to 300 (CRLAPGGSLMLVVFTGMMNFF). Solcar repeat units lie at residues 10-106 (LPFI…YQKI), 116-200 (TTQK…VRNS), and 209-299 (QKTR…MMNF).

It belongs to the mitochondrial carrier (TC 2.A.29) family.

Its subcellular location is the mitochondrion inner membrane. Functionally, transports C5-C7 oxodicarboxylates across the inner membranes of mitochondria. Can transport 2-oxoadipate, 2-oxoglutarate, adipate, glutarate, 2-oxopimelate, oxaloacetate, citrate and malate. The main physiological role is probably to supply 2-oxoadipate and 2-oxoglutarate from the mitochondrial matrix to the cytosol where they are used in the biosynthesis of lysine and glutamate, respectively, and in lysine catabolism. The chain is Mitochondrial 2-oxodicarboxylate carrier 2 (ODC2) from Saccharomyces cerevisiae (strain ATCC 204508 / S288c) (Baker's yeast).